We begin with the raw amino-acid sequence, 209 residues long: Protein GrpE (209 aa).

The interval 1–63 (MKKSRKKENM…NPEEACREEN (63 aa)) is disordered. Composition is skewed to basic and acidic residues over residues 7–42 (KENM…KVSP) and 50–63 (EAEK…REEN).

The protein belongs to the GrpE family. In terms of assembly, homodimer.

The protein localises to the cytoplasm. Its function is as follows. Participates actively in the response to hyperosmotic and heat shock by preventing the aggregation of stress-denatured proteins, in association with DnaK and GrpE. It is the nucleotide exchange factor for DnaK and may function as a thermosensor. Unfolded proteins bind initially to DnaJ; upon interaction with the DnaJ-bound protein, DnaK hydrolyzes its bound ATP, resulting in the formation of a stable complex. GrpE releases ADP from DnaK; ATP binding to DnaK triggers the release of the substrate protein, thus completing the reaction cycle. Several rounds of ATP-dependent interactions between DnaJ, DnaK and GrpE are required for fully efficient folding. The chain is Protein GrpE from Methanosarcina mazei (strain ATCC BAA-159 / DSM 3647 / Goe1 / Go1 / JCM 11833 / OCM 88) (Methanosarcina frisia).